The chain runs to 173 residues: Transcription factor E (173 aa).

The 84-residue stretch at 6-89 (PLEELLEFVR…YWYVDRETLN (84 aa)) folds into the HTH TFE/IIEalpha-type domain.

This sequence belongs to the TFE family. In terms of assembly, monomer. Interaction with RNA polymerase subunits RpoF and RpoE is necessary for Tfe stimulatory transcription activity. Able to interact with Tbp and RNA polymerase in the absence of DNA promoter. Interacts both with the preinitiation and elongation complexes.

Its function is as follows. Transcription factor that plays a role in the activation of archaeal genes transcribed by RNA polymerase. Facilitates transcription initiation by enhancing TATA-box recognition by TATA-box-binding protein (Tbp), and transcription factor B (Tfb) and RNA polymerase recruitment. Not absolutely required for transcription in vitro, but particularly important in cases where Tbp or Tfb function is not optimal. It dynamically alters the nucleic acid-binding properties of RNA polymerases by stabilizing the initiation complex and destabilizing elongation complexes. Seems to translocate with the RNA polymerase following initiation and acts by binding to the non template strand of the transcription bubble in elongation complexes. This chain is Transcription factor E, found in Ignicoccus hospitalis (strain KIN4/I / DSM 18386 / JCM 14125).